A 281-amino-acid chain; its full sequence is Pantothenate synthetase (281 aa).

ATP is bound at residue 30–37 (MGALHRGH). H37 (proton donor) is an active-site residue. Q61 is a (R)-pantoate binding site. Q61 is a binding site for beta-alanine. Position 147–150 (147–150 (GEKD)) interacts with ATP. Q153 provides a ligand contact to (R)-pantoate. ATP contacts are provided by residues I176 and 184–187 (LSSR).

This sequence belongs to the pantothenate synthetase family. Homodimer.

It is found in the cytoplasm. The catalysed reaction is (R)-pantoate + beta-alanine + ATP = (R)-pantothenate + AMP + diphosphate + H(+). Its pathway is cofactor biosynthesis; (R)-pantothenate biosynthesis; (R)-pantothenate from (R)-pantoate and beta-alanine: step 1/1. Its function is as follows. Catalyzes the condensation of pantoate with beta-alanine in an ATP-dependent reaction via a pantoyl-adenylate intermediate. The chain is Pantothenate synthetase from Porphyromonas gingivalis (strain ATCC 33277 / DSM 20709 / CIP 103683 / JCM 12257 / NCTC 11834 / 2561).